The sequence spans 335 residues: Glyceraldehyde-3-phosphate dehydrogenase (335 aa).

NAD(+) is bound by residues 10–11 (RI), Asp31, Arg75, and Thr122. D-glyceraldehyde 3-phosphate contacts are provided by residues 152–154 (SCT) and Thr183. Catalysis depends on Cys153, which acts as the Nucleophile. Asn184 contributes to the NAD(+) binding site. Residues Arg198, 211 to 212 (TG), and Arg234 contribute to the D-glyceraldehyde 3-phosphate site. Asn318 is a binding site for NAD(+).

It belongs to the glyceraldehyde-3-phosphate dehydrogenase family. In terms of assembly, homotetramer.

The protein localises to the cytoplasm. It carries out the reaction D-glyceraldehyde 3-phosphate + phosphate + NAD(+) = (2R)-3-phospho-glyceroyl phosphate + NADH + H(+). The protein operates within carbohydrate degradation; glycolysis; pyruvate from D-glyceraldehyde 3-phosphate: step 1/5. Its function is as follows. Catalyzes the oxidative phosphorylation of glyceraldehyde 3-phosphate (G3P) to 1,3-bisphosphoglycerate (BPG) using the cofactor NAD. The first reaction step involves the formation of a hemiacetal intermediate between G3P and a cysteine residue, and this hemiacetal intermediate is then oxidized to a thioester, with concomitant reduction of NAD to NADH. The reduced NADH is then exchanged with the second NAD, and the thioester is attacked by a nucleophilic inorganic phosphate to produce BPG. This chain is Glyceraldehyde-3-phosphate dehydrogenase (gap), found in Borreliella burgdorferi (strain ATCC 35210 / DSM 4680 / CIP 102532 / B31) (Borrelia burgdorferi).